Here is a 180-residue protein sequence, read N- to C-terminus: GTP cyclohydrolase 1 (180 aa).

3 residues coordinate Zn(2+): Cys-71, His-74, and Cys-142.

Belongs to the GTP cyclohydrolase I family. As to quaternary structure, homomer.

It catalyses the reaction GTP + H2O = 7,8-dihydroneopterin 3'-triphosphate + formate + H(+). Its pathway is cofactor biosynthesis; 7,8-dihydroneopterin triphosphate biosynthesis; 7,8-dihydroneopterin triphosphate from GTP: step 1/1. The polypeptide is GTP cyclohydrolase 1 (Helicobacter pylori (strain G27)).